We begin with the raw amino-acid sequence, 512 residues long: Retinaldehyde dehydrogenase 3 (512 aa).

The interval 1–23 (MATANGAVENGQPDGKPPALPRP) is disordered. At Ala-2 the chain carries N-acetylalanine. NAD(+) contacts are provided by residues Lys-204, Glu-207, and 257–262 (GSTEVG). The Proton acceptor role is filled by Glu-280. Catalysis depends on Cys-314, which acts as the Nucleophile. NAD(+)-binding residues include Gln-361 and Glu-411.

The protein belongs to the aldehyde dehydrogenase family. As to quaternary structure, homotetramer.

It is found in the cytoplasm. The enzyme catalyses all-trans-retinal + NAD(+) + H2O = all-trans-retinoate + NADH + 2 H(+). It carries out the reaction retinal + NAD(+) + H2O = retinoate + NADH + 2 H(+). The catalysed reaction is all-trans-13,14-dihydroretinal + NAD(+) + H2O = all-trans-13,14-dihydroretinoate + NADH + 2 H(+). It functions in the pathway cofactor metabolism; retinol metabolism. Its function is as follows. Catalyzes the NAD-dependent oxidation of aldehyde substrates, such as all-trans-retinal and all-trans-13,14-dihydroretinal, to their corresponding carboxylic acids, all-trans-retinoate and all-trans-13,14-dihydroretinoate, respectively. High specificity for all-trans-retinal as substrate, can also accept acetaldehyde as substrate in vitro but with lower affinity. Required for the biosynthesis of normal levels of retinoate in the embryonic ocular and nasal regions; a critical lipid in the embryonic development of the eye and the nasal region. The chain is Retinaldehyde dehydrogenase 3 (Aldh1a3) from Rattus norvegicus (Rat).